We begin with the raw amino-acid sequence, 175 residues long: Bifunctional protein PyrR (175 aa).

A PRPP-binding motif is present at residues 98 to 110 (VIIIDDVLYTGRT).

It belongs to the purine/pyrimidine phosphoribosyltransferase family. PyrR subfamily. As to quaternary structure, homodimer and homohexamer; in equilibrium.

It catalyses the reaction UMP + diphosphate = 5-phospho-alpha-D-ribose 1-diphosphate + uracil. Functionally, regulates transcriptional attenuation of the pyrimidine nucleotide (pyr) operon by binding in a uridine-dependent manner to specific sites on pyr mRNA. This disrupts an antiterminator hairpin in the RNA and favors formation of a downstream transcription terminator, leading to a reduced expression of downstream genes. Its function is as follows. Also displays a weak uracil phosphoribosyltransferase activity which is not physiologically significant. The chain is Bifunctional protein PyrR from Staphylococcus carnosus (strain TM300).